The following is a 387-amino-acid chain: VFHGGVAGLKQQVEATVNLLTTDGRTPQKQLDDIRLHLHPQLKKQNTEFQEVLQPLLRQQGICILDYIELNQQQRNYLDNYFQEQIFPVLTPLAVDPSHPFPHISNLSLNLAVVVKNPDTEEEFFARVKVPQVLPRFLPLPPELRTEDNGKTANWSGIPLEQAIAHNLESLFPGMSIQEYHPFRITRDADLELEEDEAEDLLLAIEQELRKRGMGGTPVRLEIRSQTPESIRSRLLQDLGLTENDIYEVDGLLGLRDLMYFLLLPLPDLKDPPRQSVVPSRLQRLKEPCINPDVPEPEDGKDFFSVIREKDLLVHHPYQSFSGTVVRFITSAAHDPNVLAMKMTLYRTSGDSPIVNALIAAAENGKQVSVLVELKARFDEENNIYWA.

The Mg(2+) site is built by Arg347 and Arg377.

It belongs to the polyphosphate kinase 1 (PPK1) family. The cofactor is Mg(2+). Post-translationally, an intermediate of this reaction is the autophosphorylated ppk in which a phosphate is covalently linked to a histidine residue through a N-P bond.

It carries out the reaction [phosphate](n) + ATP = [phosphate](n+1) + ADP. Its function is as follows. Catalyzes the reversible transfer of the terminal phosphate of ATP to form a long-chain polyphosphate (polyP). In Aphanizomenon baltica, this protein is Polyphosphate kinase (ppk).